Here is an 80-residue protein sequence, read N- to C-terminus: Peptide LaIT2 (80 aa).

A signal peptide spans 1-21; sequence MAKHLIVMFLVIMVISSLVDC. A BetaSPN-type CS-alpha/beta domain is found at 49-80; it reads QYGCPIISNMCEDHCRRKKMEGQCDLLDCVCS. Intrachain disulfides connect C52-C72, C59-C77, and C63-C79.

This sequence belongs to the long chain scorpion toxin family. Class 2 subfamily. As to expression, expressed by the venom gland.

It is found in the secreted. In terms of biological role, dual-function toxin that acts both as an insecticidal and an antimicrobial peptide. May inhibit voltage-gated potassium channels (Kv). This amphipathic peptide causes significant antimicrobial activity against E.coli (MIC=7 uM) but does not show any activity against S.aureus even at high concentration. In vivo, causes paralysis or death to crickets. The sequence is that of Peptide LaIT2 from Liocheles australasiae (Dwarf wood scorpion).